Consider the following 294-residue polypeptide: Epimerase family protein SDR39U1 (294 aa).

NADP(+) is bound by residues 31–32 (SR), 58–59 (LA), Glu-77, Arg-82, and Val-160.

It belongs to the NAD(P)-dependent epimerase/dehydratase family. SDR39U1 subfamily.

Putative NADP-dependent oxidoreductase. This is Epimerase family protein SDR39U1 (SDR39U1) from Bos taurus (Bovine).